A 90-amino-acid polypeptide reads, in one-letter code: Small ribosomal subunit protein bS16 (90 aa).

The protein belongs to the bacterial ribosomal protein bS16 family.

In Lactococcus lactis subsp. lactis (strain IL1403) (Streptococcus lactis), this protein is Small ribosomal subunit protein bS16.